The following is a 291-amino-acid chain: BTB/POZ domain-containing protein 19 (291 aa).

The BTB domain occupies 29-98 (SDVCFVVGQE…LYTNSVKLYR (70 aa)). One can recognise a BACK domain in the interval 134–234 (CEALQVAVTF…LALLAPAELS (101 aa)).

The sequence is that of BTB/POZ domain-containing protein 19 (BTBD19) from Homo sapiens (Human).